Here is a 72-residue protein sequence, read N- to C-terminus: Translation initiation factor IF-1 (72 aa).

The S1-like domain occupies 1 to 72; that stretch reads MSKEEAIEVE…TRGRITYRAK (72 aa).

The protein belongs to the IF-1 family. In terms of assembly, component of the 30S ribosomal translation pre-initiation complex which assembles on the 30S ribosome in the order IF-2 and IF-3, IF-1 and N-formylmethionyl-tRNA(fMet); mRNA recruitment can occur at any time during PIC assembly.

The protein localises to the cytoplasm. Functionally, one of the essential components for the initiation of protein synthesis. Stabilizes the binding of IF-2 and IF-3 on the 30S subunit to which N-formylmethionyl-tRNA(fMet) subsequently binds. Helps modulate mRNA selection, yielding the 30S pre-initiation complex (PIC). Upon addition of the 50S ribosomal subunit IF-1, IF-2 and IF-3 are released leaving the mature 70S translation initiation complex. In Geobacter sulfurreducens (strain ATCC 51573 / DSM 12127 / PCA), this protein is Translation initiation factor IF-1.